Consider the following 180-residue polypeptide: Large ribosomal subunit protein uL5 (180 aa).

The protein belongs to the universal ribosomal protein uL5 family. Part of the 50S ribosomal subunit; part of the 5S rRNA/L5/L18/L25 subcomplex. Contacts the 5S rRNA and the P site tRNA. Forms a bridge to the 30S subunit in the 70S ribosome.

Functionally, this is one of the proteins that bind and probably mediate the attachment of the 5S RNA into the large ribosomal subunit, where it forms part of the central protuberance. In the 70S ribosome it contacts protein S13 of the 30S subunit (bridge B1b), connecting the 2 subunits; this bridge is implicated in subunit movement. Contacts the P site tRNA; the 5S rRNA and some of its associated proteins might help stabilize positioning of ribosome-bound tRNAs. This chain is Large ribosomal subunit protein uL5, found in Stenotrophomonas maltophilia (strain R551-3).